Reading from the N-terminus, the 1473-residue chain is MKRFFIVILFILLVCIFNVKSEEQLGEIEISKNSFSIDTNAINAEINYVIDNSITKPKLIVTLLSGDVNSIEDITSISKDKSTLTFGDFSSLSLGNKQSNNNNRIVLMIATITGSLLFIRFNIGFNKSTTLIILIIGTIFLIGSSHSITLSEVSIRIDIKVPSTFKFEKLDLKLGSGSSNIIGLSSNSINIDSCLNLKDHKINLSDTTITSALNICSTKNIDIKNLKQSSNSLINLKTNSNITLNFGNGYSGLLDIYSNSLKIDEACDIKVDGLNTTGSCNEGTSSKLVINANGVTITGTTPTTTPTTTPTTTPTTTPTTTPTTTPTTTPTTTPTTTPTTTPTTTPTTTPTTTPTTTPTITPTTTPTTTPTTTPTDSCPTTSTWRPTMASSSSPSSPSFSSVTPILDFNFDKSNLGFRSRYKFNEKSISDGPNGIANSFSINFNETYSPDSNWLISKIPSPALRANVNYVFSFNFKLGQALSSDNTISSVTISFYSPIDLPDPNVLEYFDQPTASPLFTKTITTGSFSSSTTFQANSISIKPTTDIGLSLIAIQIIRTKQNSIPINLYFSEMKLSIPSKSIIDPTTFLTKDSELINIPKASASFDSQDPSTCPYLATDLVHWHDKSIWSSGIVPLPNASSNIILPAGKRVLISPCSISQTDIYKKITIPPTSELIFSDVNMTMHVQDIYVQGKFTMGTKECRYNAYINLIFHGTKTTSDTIATNFGSKGIAVASGGFISVQGKQYHNTWSKLSTTAWSGDSTIYIQDSVNWEVGQQVLITTSVYKDELYNQNEVLTIAAISGKKIQFTSALKYYHYGGQEYQAEVGLLSRRIVFQGDQSSSDPQQFGGHVLVSGEGQFSGLSLVRFGQKNIKGRYPLHYHLANNVQKSYISDCSVIDSYYRCYTIHGTNGVTLTRNVAFNAIGHCYYLEDGVEVDNTISYNLGAFVHTIGTPAAGYNQYGQDFLQSSDLTQPADSAAACYYITNAANSFIGNAASGGWSGFAFPNLPRPIGNHLSVSIVPSQFIAKVWEGNTAHSSGYYFEFGASIYVGGLLTYNDATGLLQYSSGRESRDTYLTGYNTSAAVWMRFNNTKVYLSNRGLSMWGERTEAVNLESHDSRRPASLFGEAWLSNAIVNGQSGNILSASVEYTRQGFQFYDTYVQTIISNIIFRNFIKYQNASSNEEDNRVIISMTHSSEFLPQGISVSKNITIQNTATSQFIGHNIPVNSTGSSRFFNFIDWDGSLTGKNVPTLIGSHEKFWQFDNTCSFNSDWNCYVCTKGTREIANVQFWVPGLISRDDAQNNDDSIGSISLFGDGITDRRSTRVIHTAGITGVSNSGWYLYLTDGTPTYMKIWLAQVIYNNYLFIAIPYPATTTFSVSSEYKYNSNYNFNFTQTSSASAVRSGDGKKYYFDGTHLFIKVINFRLNGTESFDRGGAKVYDVYWEFLIHITASNTIKPPVNGFFKGLTDTLPSSNL.

The signal sequence occupies residues 1 to 21 (MKRFFIVILFILLVCIFNVKS). The helical transmembrane segment at 105-125 (IVLMIATITGSLLFIRFNIGF) threads the bilayer. The N-linked (GlcNAc...) asparagine glycan is linked to Asn-126. A helical membrane pass occupies residues 130 to 150 (TLIILIIGTIFLIGSSHSITL). Asn-203, Asn-241, and Asn-275 each carry an N-linked (GlcNAc...) asparagine glycan. A compositionally biased stretch (low complexity) spans 298–375 (TGTTPTTTPT…PTTTPTTTPT (78 aa)). Residues 298 to 400 (TGTTPTTTPT…SSSPSSPSFS (103 aa)) form a disordered region. Positions 376 to 389 (DSCPTTSTWRPTMA) are enriched in polar residues. Low complexity predominate over residues 390 to 400 (SSSSPSSPSFS). N-linked (GlcNAc...) asparagine glycans are attached at residues Asn-444, Asn-637, Asn-680, Asn-1078, Asn-1088, Asn-1176, Asn-1206, Asn-1225, Asn-1389, and Asn-1424. A G8 domain is found at 626–754 (SIWSSGIVPL…YHNTWSKLST (129 aa)).

Belongs to the comF family.

It is found in the membrane. This is G8 domain-containing protein DDB_G0286311 from Dictyostelium discoideum (Social amoeba).